Reading from the N-terminus, the 613-residue chain is Laccase 1 (613 aa).

An N-terminal signal peptide occupies residues methionine 1–alanine 20. Plastocyanin-like domains follow at residues isoleucine 29 to lysine 142 and tyrosine 171 to proline 359. An N-linked (GlcNAc...) asparagine glycan is attached at asparagine 74. 4 residues coordinate Cu cation: histidine 78, histidine 80, histidine 122, and histidine 124. Asparagine 256, asparagine 279, asparagine 444, asparagine 468, and asparagine 484 each carry an N-linked (GlcNAc...) asparagine glycan. A Plastocyanin-like 3 domain is found at asparagine 468 to glycine 598. Histidine 506, histidine 509, and histidine 511 together coordinate Cu cation. Asparagine 526 carries an N-linked (GlcNAc...) asparagine glycan. Histidine 580, cysteine 581, histidine 582, and histidine 586 together coordinate Cu cation.

The protein belongs to the multicopper oxidase family. It depends on Cu cation as a cofactor.

Its subcellular location is the cell surface. The protein operates within pigment biosynthesis. Its function is as follows. Laccase; part of the Pks1 gene cluster that mediates the biosynthesis of an anthraquinone derivative pigment that contributes to conidial pigmentation that provides protection from UV radiation, heat and cold stress. The polyketide synthase Pks1 produces 1-acetyl-2,4,6,8-tetrahydroxy-9,10-anthraquinone though condensation of acetyl-CoA with malonyl-CoA. The dehydratase EthD and the laccase Mlac1 further convert the anthraquinone derivative into the final conidial pigment. The polypeptide is Laccase 1 (Metarhizium robertsii (strain ARSEF 23 / ATCC MYA-3075) (Metarhizium anisopliae (strain ARSEF 23))).